An 87-amino-acid chain; its full sequence is MKPAGAFLLLISLACLFLSVDAVSQGGFQAFCSNYEKTLAPDGKSCPKTHKPVCGTDGKTYQNRCAFCQTAMERSLGKLGFKHEGKC.

Positions 1 to 22 (MKPAGAFLLLISLACLFLSVDA) are cleaved as a signal peptide. A Kazal-like domain is found at 26-87 (GGFQAFCSNY…KLGFKHEGKC (62 aa)). 3 cysteine pairs are disulfide-bonded: Cys-32–Cys-68, Cys-46–Cys-65, and Cys-54–Cys-87.

As to expression, expressed in epydiymis, in the caput.

The protein localises to the secreted. Functionally, inhibits trypsin. The polypeptide is Serine protease inhibitor Kazal-type 12 (Spink12) (Mus musculus (Mouse)).